Here is a 500-residue protein sequence, read N- to C-terminus: Cholesterol 24-hydroxylase (500 aa).

A helical membrane pass occupies residues Pro3 to Val23. Cys437 lines the heme pocket.

The protein belongs to the cytochrome P450 family. Requires heme as cofactor. Expressed in brain. The mRNA was broadly distributed with higher levels in gray matter zones and lower levels in regions rich in white matter. Not detected in fetal sample but its expression increases linearly with age.

Its subcellular location is the endoplasmic reticulum membrane. It is found in the microsome membrane. The protein localises to the postsynapse. It localises to the presynapse. The protein resides in the cell projection. Its subcellular location is the dendrite. It catalyses the reaction cholesterol + reduced [NADPH--hemoprotein reductase] + O2 = (24S)-hydroxycholesterol + oxidized [NADPH--hemoprotein reductase] + H2O + H(+). The catalysed reaction is cholestanol + reduced [NADPH--hemoprotein reductase] + O2 = (24S)-hydroxycholestanol + oxidized [NADPH--hemoprotein reductase] + H2O + H(+). It carries out the reaction 7-dehydrocholesterol + reduced [NADPH--hemoprotein reductase] + O2 = cholesta-5,7-dien-3beta,24S-diol + oxidized [NADPH--hemoprotein reductase] + H2O + H(+). The enzyme catalyses 7-dehydrocholesterol + reduced [NADPH--hemoprotein reductase] + O2 = cholesta-5,7-dien-3beta,25-diol + oxidized [NADPH--hemoprotein reductase] + H2O + H(+). It catalyses the reaction desmosterol + reduced [NADPH--hemoprotein reductase] + O2 = (24Z),26-hydroxydesmosterol + oxidized [NADPH--hemoprotein reductase] + H2O + H(+). The catalysed reaction is desmosterol + reduced [NADPH--hemoprotein reductase] + O2 = (24S)-25-epoxycholesterol + oxidized [NADPH--hemoprotein reductase] + H2O + H(+). It carries out the reaction 4beta-hydroxycholesterol + reduced [NADPH--hemoprotein reductase] + O2 = 4beta,24S-dihydroxycholesterol + oxidized [NADPH--hemoprotein reductase] + H2O + H(+). The enzyme catalyses (24S)-hydroxycholesterol + reduced [NADPH--hemoprotein reductase] + O2 = (24S,25R)-24,26-dihydroxycholesterol + oxidized [NADPH--hemoprotein reductase] + H2O + H(+). It catalyses the reaction (24S)-hydroxycholesterol + reduced [NADPH--hemoprotein reductase] + O2 = 24S,25-dihydroxycholesterol + oxidized [NADPH--hemoprotein reductase] + H2O + H(+). The catalysed reaction is 7alpha-hydroxycholesterol + reduced [NADPH--hemoprotein reductase] + O2 = (24S)-7alpha-dihydroxycholesterol + oxidized [NADPH--hemoprotein reductase] + H2O + H(+). It carries out the reaction progesterone + reduced [NADPH--hemoprotein reductase] + O2 = 17alpha-hydroxyprogesterone + oxidized [NADPH--hemoprotein reductase] + H2O + H(+). The enzyme catalyses testosterone + reduced [NADPH--hemoprotein reductase] + O2 = 16beta,17beta-dihydroxyandrost-4-en-3-one + oxidized [NADPH--hemoprotein reductase] + H2O + H(+). It catalyses the reaction testosterone + reduced [NADPH--hemoprotein reductase] + O2 = 2-hydroxytestosterone + oxidized [NADPH--hemoprotein reductase] + H2O + H(+). The catalysed reaction is testosterone + reduced [NADPH--hemoprotein reductase] + O2 = 6beta,17beta-dihydroxyandrost-4-en-3-one + oxidized [NADPH--hemoprotein reductase] + H2O + H(+). Its pathway is steroid metabolism; cholesterol degradation. It functions in the pathway lipid metabolism; C21-steroid hormone metabolism. P450 monooxygenase that plays a major role in cholesterol homeostasis in the brain. Primarily catalyzes the hydroxylation (with S stereochemistry) at C-24 of cholesterol side chain, triggering cholesterol diffusion out of neurons and its further degradation. By promoting constant cholesterol elimination in neurons, may activate the mevalonate pathway and coordinate the synthesis of new cholesterol and nonsterol isoprenoids involved in synaptic activity and learning. Further hydroxylates cholesterol derivatives and hormone steroids on both the ring and side chain of these molecules, converting them into active oxysterols involved in lipid signaling and biosynthesis. Acts as an epoxidase converting cholesta-5,24-dien-3beta-ol/desmosterol into (24S),25-epoxycholesterol, an abundant lipid ligand of nuclear NR1H2 and NR1H3 receptors shown to promote neurogenesis in developing brain. May also catalyze the oxidative metabolism of xenobiotics, such as clotrimazole. The polypeptide is Cholesterol 24-hydroxylase (Homo sapiens (Human)).